The chain runs to 191 residues: Peptidyl-tRNA hydrolase (191 aa).

A tRNA-binding site is contributed by Tyr-16. His-21 acts as the Proton acceptor in catalysis. TRNA is bound by residues Tyr-67, Asn-69, and Asn-115.

This sequence belongs to the PTH family. In terms of assembly, monomer.

The protein resides in the cytoplasm. The catalysed reaction is an N-acyl-L-alpha-aminoacyl-tRNA + H2O = an N-acyl-L-amino acid + a tRNA + H(+). Hydrolyzes ribosome-free peptidyl-tRNAs (with 1 or more amino acids incorporated), which drop off the ribosome during protein synthesis, or as a result of ribosome stalling. In terms of biological role, catalyzes the release of premature peptidyl moieties from peptidyl-tRNA molecules trapped in stalled 50S ribosomal subunits, and thus maintains levels of free tRNAs and 50S ribosomes. In Wigglesworthia glossinidia brevipalpis, this protein is Peptidyl-tRNA hydrolase.